A 416-amino-acid polypeptide reads, in one-letter code: Enterobactin exporter EntS (416 aa).

Residues 1-21 (MNKQSWLLNLSLLKTHPAFRA) are Cytoplasmic-facing. Residues 22–42 (VFLARFISIVSLGLLGVAVPV) form a helical membrane-spanning segment. At 43–55 (QIQMMTHSTWQVG) the chain is on the periplasmic side. The helical transmembrane segment at 56–76 (LSVTLTGGAMFVGLMVGGVLA) threads the bilayer. Over 77 to 83 (DRYERKK) the chain is Cytoplasmic. Residues 84–104 (VILLARGTCGIGFIGLCLNAL) traverse the membrane as a helical segment. Residues 105–109 (LPEPS) are Periplasmic-facing. Residues 110–130 (LLAIYLLGLWDGFFASLGVTA) form a helical membrane-spanning segment. Residues 131–156 (LLAATPALVGRENLMQAGAITMLTVR) lie on the Cytoplasmic side of the membrane. Residues 157 to 177 (LGSVISPMIGGLLLATGGVAW) form a helical membrane-spanning segment. Residue asparagine 178 is a topological domain, periplasmic. Residues 179–199 (YGLAAAGTFITLLPLLSLPAL) form a helical membrane-spanning segment. Residues 200 to 218 (PPPPQPREHPLKSLLAGFR) are Cytoplasmic-facing. The chain crosses the membrane as a helical span at residues 219–239 (FLLASPLVGGIALLGGLLTMA). Over 240-256 (SAVRVLYPALADNWQMS) the chain is Periplasmic. The chain crosses the membrane as a helical span at residues 257-277 (AAQIGFLYAAIPLGAAIGALT). Over 278–287 (SGKLAHSVRP) the chain is Cytoplasmic. The chain crosses the membrane as a helical span at residues 288–307 (GLLMLLSTLGAFLAISLFGL). Topologically, residues 308-313 (MPMWIL) are periplasmic. The chain crosses the membrane as a helical span at residues 314-336 (GVVCLALFGWLSAVSSLLQYTML). Topologically, residues 337-356 (QTQTPEAMLGRINGLWTAQN) are cytoplasmic. The helical transmembrane segment at 357–377 (VTGDAIGAALLGGLGAMMTPV) threads the bilayer. Residue alanine 378 is a topological domain, periplasmic. A helical transmembrane segment spans residues 379–399 (SASASGFGLLIIGVLLLLVLV). The Cytoplasmic portion of the chain corresponds to 400-416 (ELRRFRQTPPQVTASDS).

This sequence belongs to the major facilitator superfamily. EntS (TC 2.A.1.38) family.

The protein localises to the cell inner membrane. Component of an export pathway for enterobactin. The polypeptide is Enterobactin exporter EntS (Escherichia coli O45:K1 (strain S88 / ExPEC)).